We begin with the raw amino-acid sequence, 984 residues long: Protein translocase subunit SecA (984 aa).

ATP-binding positions include Q96, 114–118, and D595; that span reads GEGKT. Composition is skewed to basic and acidic residues over residues 930-942 and 952-971; these read EHEE…RLLE and KSDK…EERL. Positions 930 to 984 are disordered; that stretch reads EHEEEKKHQRLLEEAELQGVQGKSDKKPRPKTLKERLKEERLRKRKLKAKKKEQE. Positions 972–984 are enriched in basic residues; the sequence is RKRKLKAKKKEQE.

Belongs to the SecA family. In terms of assembly, monomer and homodimer. Part of the essential Sec protein translocation apparatus which comprises SecA, SecYEG and auxiliary proteins SecDF. Other proteins may also be involved.

The protein localises to the cell inner membrane. The protein resides in the cytoplasm. It carries out the reaction ATP + H2O + cellular proteinSide 1 = ADP + phosphate + cellular proteinSide 2.. Functionally, part of the Sec protein translocase complex. Interacts with the SecYEG preprotein conducting channel. Has a central role in coupling the hydrolysis of ATP to the transfer of proteins into and across the cell membrane, serving as an ATP-driven molecular motor driving the stepwise translocation of polypeptide chains across the membrane. The polypeptide is Protein translocase subunit SecA (Aquifex aeolicus (strain VF5)).